The sequence spans 122 residues: UPF0482 protein Spro_2288 (122 aa).

The signal sequence occupies residues 1 to 31 (MKTLSTQRLLRGMLPVAMLMLMGAWQAPALA). Positions 46–71 (SNSGAMSTEAARQSKQQFNDTKSLRN) are disordered.

It belongs to the UPF0482 family.

The chain is UPF0482 protein Spro_2288 from Serratia proteamaculans (strain 568).